Reading from the N-terminus, the 370-residue chain is Cyclic AMP-responsive element-binding protein 3-like protein 4 (370 aa).

Residues 1–55 (MELGCPELLEPPEDIFSTGSFLELGFNGPASKVPVTRGLQKSEPDDFLNLFIDPN) are required for transcriptional activation. Residues 1-271 (MELGCPELLE…QTSSRAAQTS (271 aa)) are Cytoplasmic-facing. The tract at residues 61–85 (ETSPGRDSGVSEDPGSPAQQASSSP) is disordered. A compositionally biased stretch (low complexity) spans 76–85 (SPAQQASSSP). The bZIP domain occupies 193 to 256 (ILKKIRRKIR…IFLMEQVRQL (64 aa)). Residues 195–234 (KKIRRKIRNKQSAQDSRRRKKEYLDGLESRVAACSEQNQK) are basic motif. The segment at 235–256 (LQRKVQELERQNIFLMEQVRQL) is leucine-zipper. A helical; Signal-anchor for type II membrane protein membrane pass occupies residues 272–292 (TCVLILLFSLALIILPSFSPF). The Lumenal portion of the chain corresponds to 293-370 (QGQSEARPED…IRGMVHTDEM (78 aa)). N-linked (GlcNAc...) asparagine glycans are attached at residues Asn-318 and Asn-342.

The protein belongs to the bZIP family. ATF subfamily. As to quaternary structure, binds DNA as a dimer. Forms a heterodimer with CREM isoform Tau. Controlled by regulated intramembrane proteolysis (RIP). Following ER stress a fragment containing the cytoplasmic transcription factor domain is released by proteolysis. The cleavage seems to be performed sequentially by site-1 and site-2 proteases (PS1 and PS2). PS1 cleavage may be suppressed by a determinant in the C-terminal region. As to expression, predominantly expressed at high levels in testis with isoform 2 being the predominant isoform. Specifically expressed in postmeiotic spermatids and accumulates in the mid/late stage (at protein level). Ubiquitously expressed at low levels.

Its subcellular location is the endoplasmic reticulum membrane. It localises to the cytoplasmic vesicle. The protein resides in the secretory vesicle. It is found in the acrosome inner membrane. The protein localises to the nucleus. Transcriptional activator that may play a role in the unfolded protein response of the testis. Proposed to be involved in spermiogenesis. May be involved in regulating the maturation of sperm head nuclei. Alternatively proposed to be a paternally delivered transcription factor that may function in early zygotic gene activation. Increases the binding of CREM isoform Tau with CRE. The CREM isoform Tau-CREB3L4 heterodimer functions through CRE but not through UPRE and may recruit HIRA to CRE to regulate histone exchange. This is Cyclic AMP-responsive element-binding protein 3-like protein 4 (Creb3l4) from Mus musculus (Mouse).